Consider the following 259-residue polypeptide: Steroidogenic acute regulatory-like protein 1 (259 aa).

A signal peptide spans 1–20 (MTLLPFTCLILLYSLGSVMS). The region spanning 43 to 254 (YATALKTCGE…NRRHFQNLKA (212 aa)) is the START domain.

In Caenorhabditis elegans, this protein is Steroidogenic acute regulatory-like protein 1 (strl-1).